Here is a 156-residue protein sequence, read N- to C-terminus: Probable succinate transporter subunit YjjB (156 aa).

Transmembrane regions (helical) follow at residues 7–27, 54–74, 86–106, and 128–148; these read WALL…AMVF, FGMN…IIGI, VFTV…TAMI, and FLKA…PGIW.

The protein belongs to the ThrE exporter (TC 2.A.79) family. In terms of assembly, the transporter is composed of YjjB and YjjP.

The protein resides in the cell inner membrane. Its function is as follows. Involved in succinate export with YjjP. Both proteins are required for export. This chain is Probable succinate transporter subunit YjjB, found in Pectobacterium carotovorum subsp. carotovorum (strain PC1).